The sequence spans 294 residues: 4-hydroxy-tetrahydrodipicolinate synthase (294 aa).

Threonine 44 is a pyruvate binding site. Tyrosine 132 functions as the Proton donor/acceptor in the catalytic mechanism. Lysine 161 serves as the catalytic Schiff-base intermediate with substrate. Isoleucine 206 is a pyruvate binding site.

It belongs to the DapA family. In terms of assembly, homotetramer; dimer of dimers.

The protein resides in the cytoplasm. It catalyses the reaction L-aspartate 4-semialdehyde + pyruvate = (2S,4S)-4-hydroxy-2,3,4,5-tetrahydrodipicolinate + H2O + H(+). The protein operates within amino-acid biosynthesis; L-lysine biosynthesis via DAP pathway; (S)-tetrahydrodipicolinate from L-aspartate: step 3/4. Its activity is regulated as follows. Is not inhibited by (S)-lysine, in contrast to E.coli DapA. In terms of biological role, catalyzes the condensation of (S)-aspartate-beta-semialdehyde [(S)-ASA] and pyruvate to 4-hydroxy-tetrahydrodipicolinate (HTPA). The sequence is that of 4-hydroxy-tetrahydrodipicolinate synthase from Thermotoga maritima (strain ATCC 43589 / DSM 3109 / JCM 10099 / NBRC 100826 / MSB8).